The chain runs to 486 residues: ATP synthase subunit beta (486 aa).

Residue 164–171 (GGAGVGKT) coordinates ATP.

The protein belongs to the ATPase alpha/beta chains family. F-type ATPases have 2 components, CF(1) - the catalytic core - and CF(0) - the membrane proton channel. CF(1) has five subunits: alpha(3), beta(3), gamma(1), delta(1), epsilon(1). CF(0) has four main subunits: a(1), b(1), b'(1) and c(9-12).

Its subcellular location is the cellular thylakoid membrane. The enzyme catalyses ATP + H2O + 4 H(+)(in) = ADP + phosphate + 5 H(+)(out). In terms of biological role, produces ATP from ADP in the presence of a proton gradient across the membrane. The catalytic sites are hosted primarily by the beta subunits. This is ATP synthase subunit beta from Prochlorococcus marinus (strain AS9601).